We begin with the raw amino-acid sequence, 304 residues long: tRNA pseudouridine synthase B (304 aa).

The active-site Nucleophile is the Asp38.

The protein belongs to the pseudouridine synthase TruB family. Type 1 subfamily.

It catalyses the reaction uridine(55) in tRNA = pseudouridine(55) in tRNA. Responsible for synthesis of pseudouridine from uracil-55 in the psi GC loop of transfer RNAs. The protein is tRNA pseudouridine synthase B of Geobacter sulfurreducens (strain ATCC 51573 / DSM 12127 / PCA).